The sequence spans 224 residues: Flagellar L-ring protein (224 aa).

The first 15 residues, 1–15, serve as a signal peptide directing secretion; that stretch reads MARYLVLAVALLLAA. C16 carries the N-palmitoyl cysteine lipid modification. C16 is lipidated: S-diacylglycerol cysteine.

The protein belongs to the FlgH family. In terms of assembly, the basal body constitutes a major portion of the flagellar organelle and consists of four rings (L,P,S, and M) mounted on a central rod.

The protein localises to the cell outer membrane. It is found in the bacterial flagellum basal body. Its function is as follows. Assembles around the rod to form the L-ring and probably protects the motor/basal body from shearing forces during rotation. The chain is Flagellar L-ring protein from Shewanella baltica (strain OS223).